The chain runs to 275 residues: uncharacterized protein (275 aa).

It belongs to the SMP-30/CGR1 family.

This is an uncharacterized protein from Sulfolobus acidocaldarius (strain ATCC 33909 / DSM 639 / JCM 8929 / NBRC 15157 / NCIMB 11770).